We begin with the raw amino-acid sequence, 117 residues long: Large ribosomal subunit protein bL17 (117 aa).

The protein belongs to the bacterial ribosomal protein bL17 family. Part of the 50S ribosomal subunit. Contacts protein L32.

The sequence is that of Large ribosomal subunit protein bL17 from Endomicrobium trichonymphae.